The chain runs to 268 residues: Imidazole glycerol phosphate synthase subunit HisF (268 aa).

Active-site residues include Asp12 and Asp131.

The protein belongs to the HisA/HisF family. In terms of assembly, heterodimer of HisH and HisF.

It is found in the cytoplasm. The enzyme catalyses 5-[(5-phospho-1-deoxy-D-ribulos-1-ylimino)methylamino]-1-(5-phospho-beta-D-ribosyl)imidazole-4-carboxamide + L-glutamine = D-erythro-1-(imidazol-4-yl)glycerol 3-phosphate + 5-amino-1-(5-phospho-beta-D-ribosyl)imidazole-4-carboxamide + L-glutamate + H(+). It functions in the pathway amino-acid biosynthesis; L-histidine biosynthesis; L-histidine from 5-phospho-alpha-D-ribose 1-diphosphate: step 5/9. IGPS catalyzes the conversion of PRFAR and glutamine to IGP, AICAR and glutamate. The HisF subunit catalyzes the cyclization activity that produces IGP and AICAR from PRFAR using the ammonia provided by the HisH subunit. In Methanoculleus marisnigri (strain ATCC 35101 / DSM 1498 / JR1), this protein is Imidazole glycerol phosphate synthase subunit HisF.